A 217-amino-acid chain; its full sequence is Superoxide dismutase [Cu-Zn], chloroplastic (217 aa).

The N-terminal 63 residues, 1 to 63 (MAAHSIFTTT…TTPKPLTVFA (63 aa)), are a transit peptide targeting the chloroplast. Residues His109, His111, and His126 each contribute to the Cu cation site. Cysteines 120 and 209 form a disulfide. Zn(2+) is bound by residues His126, His134, His143, and Asp146. His183 serves as a coordination point for Cu cation.

It belongs to the Cu-Zn superoxide dismutase family. Homotetramer. Cu cation is required as a cofactor. Requires Zn(2+) as cofactor.

The protein localises to the plastid. It is found in the chloroplast. The enzyme catalyses 2 superoxide + 2 H(+) = H2O2 + O2. Its function is as follows. Destroys radicals which are normally produced within the cells and which are toxic to biological systems. This Solanum lycopersicum (Tomato) protein is Superoxide dismutase [Cu-Zn], chloroplastic (SODCP.2).